Reading from the N-terminus, the 240-residue chain is FMN-dependent NADH:quinone oxidoreductase 2 (240 aa).

Residues serine 10 and 23–25 contribute to the FMN site; that span reads SIS.

Belongs to the azoreductase type 1 family. As to quaternary structure, homodimer. FMN serves as cofactor.

The catalysed reaction is 2 a quinone + NADH + H(+) = 2 a 1,4-benzosemiquinone + NAD(+). It carries out the reaction N,N-dimethyl-1,4-phenylenediamine + anthranilate + 2 NAD(+) = 2-(4-dimethylaminophenyl)diazenylbenzoate + 2 NADH + 2 H(+). Its function is as follows. Quinone reductase that provides resistance to thiol-specific stress caused by electrophilic quinones. Also exhibits azoreductase activity. Catalyzes the reductive cleavage of the azo bond in aromatic azo compounds to the corresponding amines. The protein is FMN-dependent NADH:quinone oxidoreductase 2 of Idiomarina loihiensis (strain ATCC BAA-735 / DSM 15497 / L2-TR).